Consider the following 390-residue polypeptide: Chorismate synthase 1 (390 aa).

Residues Arg-39 and Arg-45 each contribute to the NADP(+) site. The segment at 95–117 (EQEEKEMKRKVTKPRPGHADLNG) is disordered. FMN contacts are provided by residues 132–134 (RSS), 253–254 (NA), Gly-298, 313–317 (KPIPT), and Arg-339.

The protein belongs to the chorismate synthase family. In terms of assembly, homotetramer. Requires FMNH2 as cofactor.

The enzyme catalyses 5-O-(1-carboxyvinyl)-3-phosphoshikimate = chorismate + phosphate. It participates in metabolic intermediate biosynthesis; chorismate biosynthesis; chorismate from D-erythrose 4-phosphate and phosphoenolpyruvate: step 7/7. Functionally, catalyzes the anti-1,4-elimination of the C-3 phosphate and the C-6 proR hydrogen from 5-enolpyruvylshikimate-3-phosphate (EPSP) to yield chorismate, which is the branch point compound that serves as the starting substrate for the three terminal pathways of aromatic amino acid biosynthesis. This reaction introduces a second double bond into the aromatic ring system. The polypeptide is Chorismate synthase 1 (Bacillus thuringiensis (strain Al Hakam)).